The primary structure comprises 140 residues: Nucleoside diphosphate kinase (140 aa).

Residues lysine 11, phenylalanine 59, arginine 87, threonine 93, arginine 104, and asparagine 114 each contribute to the ATP site. Residue histidine 117 is the Pros-phosphohistidine intermediate of the active site.

The protein belongs to the NDK family. In terms of assembly, homotetramer. Mg(2+) is required as a cofactor.

It localises to the cytoplasm. The catalysed reaction is a 2'-deoxyribonucleoside 5'-diphosphate + ATP = a 2'-deoxyribonucleoside 5'-triphosphate + ADP. It carries out the reaction a ribonucleoside 5'-diphosphate + ATP = a ribonucleoside 5'-triphosphate + ADP. Its function is as follows. Major role in the synthesis of nucleoside triphosphates other than ATP. The ATP gamma phosphate is transferred to the NDP beta phosphate via a ping-pong mechanism, using a phosphorylated active-site intermediate. This Mesorhizobium japonicum (strain LMG 29417 / CECT 9101 / MAFF 303099) (Mesorhizobium loti (strain MAFF 303099)) protein is Nucleoside diphosphate kinase.